The following is a 142-amino-acid chain: Hemoglobin subunit alpha-1 (142 aa).

The 141-residue stretch at 2 to 142 folds into the Globin domain; it reads LLSADDKKHI…VSSVLTSKYR (141 aa). His-59 contacts O2. His-88 provides a ligand contact to heme b.

The protein belongs to the globin family. As to quaternary structure, heterotetramer of two alpha chains and two beta chains. In terms of tissue distribution, red blood cells.

Functionally, involved in oxygen transport from the lung to the various peripheral tissues. The sequence is that of Hemoglobin subunit alpha-1 (hba1) from Xenopus borealis (Kenyan clawed frog).